Reading from the N-terminus, the 218-residue chain is Ribonuclease T (218 aa).

An Exonuclease domain is found at 22 to 196 (VVVDVETAGF…YDAMKTAELF (175 aa)). D25, E27, H183, and D188 together coordinate Mg(2+). Catalysis depends on H183, which acts as the Proton donor/acceptor.

The protein belongs to the RNase T family. In terms of assembly, homodimer. The cofactor is Mg(2+).

Functionally, trims short 3' overhangs of a variety of RNA species, leaving a one or two nucleotide 3' overhang. Responsible for the end-turnover of tRNA: specifically removes the terminal AMP residue from uncharged tRNA (tRNA-C-C-A). Also appears to be involved in tRNA biosynthesis. This is Ribonuclease T from Hahella chejuensis (strain KCTC 2396).